A 295-amino-acid polypeptide reads, in one-letter code: tRNA-cytidine(32) 2-sulfurtransferase (295 aa).

The PP-loop motif motif lies at 63–68 (SGGKDS). 3 residues coordinate [4Fe-4S] cluster: cysteine 138, cysteine 141, and cysteine 229.

It belongs to the TtcA family. In terms of assembly, homodimer. Mg(2+) is required as a cofactor. Requires [4Fe-4S] cluster as cofactor.

The protein localises to the cytoplasm. The catalysed reaction is cytidine(32) in tRNA + S-sulfanyl-L-cysteinyl-[cysteine desulfurase] + AH2 + ATP = 2-thiocytidine(32) in tRNA + L-cysteinyl-[cysteine desulfurase] + A + AMP + diphosphate + H(+). It participates in tRNA modification. Its function is as follows. Catalyzes the ATP-dependent 2-thiolation of cytidine in position 32 of tRNA, to form 2-thiocytidine (s(2)C32). The sulfur atoms are provided by the cysteine/cysteine desulfurase (IscS) system. This chain is tRNA-cytidine(32) 2-sulfurtransferase, found in Mesorhizobium japonicum (strain LMG 29417 / CECT 9101 / MAFF 303099) (Mesorhizobium loti (strain MAFF 303099)).